We begin with the raw amino-acid sequence, 537 residues long: P2Y purinoceptor 4 (537 aa).

The Extracellular portion of the chain corresponds to 1–49 (MTEDIMATSYPTFLTTPYLPMKLLMNLTNDTEDICVFDEGFKFLLLPVS). N-linked (GlcNAc...) asparagine glycosylation is found at Asn-26 and Asn-29. The chain crosses the membrane as a helical span at residues 50-70 (YSAVFMVGLPLNIAAMWIFIA). The Cytoplasmic segment spans residues 71–79 (KMRPWNPTT). A helical membrane pass occupies residues 80–100 (VYMFNLALSDTLYVLSLPTLV). Topologically, residues 101–118 (YYYADKNNWPFGEVLCKL) are extracellular. A disulfide bridge links Cys-116 with Cys-193. The helical transmembrane segment at 119–139 (VRFLFYANLYSSILFLTCISV) threads the bilayer. Residues 140–161 (HRYRGVCHPITSLRRMNAKHAY) are Cytoplasmic-facing. The helical transmembrane segment at 162-182 (VICALVWLSVTLCLVPNLIFV) threads the bilayer. Topologically, residues 183–210 (TVSPKVKNTICHDTTRPEDFARYVEYST) are extracellular. The chain crosses the membrane as a helical span at residues 211–231 (AIMCLLFGIPCLIIAGCYGLM). At 232-254 (TRELMKPIVSGNQQTLPSYKKRS) the chain is on the cytoplasmic side. Residues 255–275 (IKTIIFVMIAFAICFMPFHIT) traverse the membrane as a helical segment. Over 276 to 292 (RTLYYYARLLGIKCYAL) the chain is Extracellular. The chain crosses the membrane as a helical span at residues 293 to 316 (NVINVTYKVTRPLASANSCIDPIL). The Cytoplasmic segment spans residues 317 to 537 (YFLANDRYRR…EKELQNFPKA (221 aa)). The disordered stretch occupies residues 401 to 505 (NRRSTIKRNS…GEGTSTWNLL (105 aa)). Composition is skewed to basic and acidic residues over residues 409–423 (NSTD…RHGE) and 431–447 (VVEK…RKTT). The segment covering 448 to 465 (EQSSKTNAEQDELQTQID) has biased composition (polar residues).

This sequence belongs to the G-protein coupled receptor 1 family.

The protein resides in the cell membrane. In terms of biological role, receptor for extracellular ATP, UTP, CTP, GTP and ITP. The activity of this receptor is mediated by G proteins which activate a phosphatidylinositol-calcium second messenger system. May play a key role in the early development of neural tissue. The protein is P2Y purinoceptor 4 (p2ry4) of Xenopus laevis (African clawed frog).